Reading from the N-terminus, the 69-residue chain is Putative membrane protein insertion efficiency factor (69 aa).

It belongs to the UPF0161 family.

The protein resides in the cell inner membrane. In terms of biological role, could be involved in insertion of integral membrane proteins into the membrane. In Dechloromonas aromatica (strain RCB), this protein is Putative membrane protein insertion efficiency factor.